Consider the following 190-residue polypeptide: Signal peptidase complex subunit 3 (190 aa).

The Cytoplasmic segment spans residues methionine 1–glutamine 9. The chain crosses the membrane as a helical; Signal-anchor for type II membrane protein span at residues tyrosine 10–leucine 32. Over glutamine 33–lysine 190 the chain is Lumenal.

Belongs to the SPCS3 family. Component of the signal peptidase complex (SPC) composed of a catalytic subunit SEC11 and three accessory subunits SPC1, SPC2 and SPC3. The complex induces a local thinning of the ER membrane which is used to measure the length of the signal peptide (SP) h-region of protein substrates. This ensures the selectivity of the complex towards h-regions shorter than 18-20 amino acids. SPC associates with the translocon complex.

Its subcellular location is the endoplasmic reticulum membrane. Essential component of the signal peptidase complex (SPC) which catalyzes the cleavage of N-terminal signal sequences from nascent proteins as they are translocated into the lumen of the endoplasmic reticulum. Essential for the SPC catalytic activity, possibly by stabilizing and positioning the active center of the complex close to the lumenal surface. Essential for viability. This Debaryomyces hansenii (strain ATCC 36239 / CBS 767 / BCRC 21394 / JCM 1990 / NBRC 0083 / IGC 2968) (Yeast) protein is Signal peptidase complex subunit 3 (SPC3).